The following is a 51-amino-acid chain: Large ribosomal subunit protein bL33 (51 aa).

Positions 1–23 are disordered; it reads MREKIKLESSAGTGHFYTTTKNK. The span at 10 to 20 shows a compositional bias: polar residues; that stretch reads SAGTGHFYTTT.

It belongs to the bacterial ribosomal protein bL33 family.

The chain is Large ribosomal subunit protein bL33 from Methylobacillus flagellatus (strain ATCC 51484 / DSM 6875 / VKM B-1610 / KT).